Reading from the N-terminus, the 182-residue chain is Flavin prenyltransferase UbiX (182 aa).

FMN is bound by residues 9–11, Ser-35, 86–89, and Arg-121; these read GAS and SIKT. Tyr-151 and Arg-167 together coordinate dimethylallyl phosphate.

Belongs to the UbiX/PAD1 family.

It carries out the reaction dimethylallyl phosphate + FMNH2 = prenylated FMNH2 + phosphate. Flavin prenyltransferase that catalyzes the synthesis of the prenylated FMN cofactor (prenyl-FMN) for 4-hydroxy-3-polyprenylbenzoic acid decarboxylase UbiD. The prenyltransferase is metal-independent and links a dimethylallyl moiety from dimethylallyl monophosphate (DMAP) to the flavin N5 and C6 atoms of FMN. In Archaeoglobus fulgidus (strain ATCC 49558 / DSM 4304 / JCM 9628 / NBRC 100126 / VC-16), this protein is Flavin prenyltransferase UbiX.